Consider the following 315-residue polypeptide: MASRDFLGRFGGEKGAASDKAGGGAGEADEVAELSLGLSLGGCFGANSGRDAKKPRLVRSSSLAAMCSLPGTSDDLAAATPPPAPLMRTSSLPTETEEERWRRREMQSLKRLQAKRKRLERRTSMNSGKSGGSSSRDDAQEPLYPSAFQLRRSVVDQGNPSSSMPEQGSGDGAEVKSTSSMEISSDNNNNASNQNKSLPPPAPSPAAGKLPNGIVKEQPPLRTLRSLTMRTTSTGDLRKSMMEDMPMVSSKVDGPNGKKIDGFLYKYRKGEEVRIVCVCHGNFLTPAEFVKHAGGGDVTNPLRHIVVNPSPSVFL.

3 disordered regions span residues 1–28 (MASRDFLGRFGGEKGAASDKAGGGAGEA), 68–142 (SLPG…AQEP), and 156–237 (DQGN…TGDL). Over residues 99–108 (ERWRRREMQS) the composition is skewed to basic and acidic residues. Polar residues predominate over residues 156–166 (DQGNPSSSMPE). Low complexity-rich tracts occupy residues 184–197 (SSDNNNNASNQNKS) and 221–234 (LRTLRSLTMRTTST).

It belongs to the Ninja family.

Its subcellular location is the nucleus. The polypeptide is Ninja-family protein 1 (AFP-A1) (Triticum aestivum (Wheat)).